A 341-amino-acid polypeptide reads, in one-letter code: uncharacterized protein (341 aa).

Catalysis depends on residues Ser-111, Asp-247, and His-275.

The protein belongs to the DmpD/TodF/XylF esterase family.

This is an uncharacterized protein from Mycobacterium bovis (strain ATCC BAA-935 / AF2122/97).